The primary structure comprises 390 residues: Bifunctional enzyme IspD/IspF (390 aa).

The segment at 1-229 (MAAGRGERAG…RQDHAVFPDI (229 aa)) is 2-C-methyl-D-erythritol 4-phosphate cytidylyltransferase. Residues 230–390 (RTGNGYDVHS…TVIYPGEVPE (161 aa)) form a 2-C-methyl-D-erythritol 2,4-cyclodiphosphate synthase region. A divalent metal cation-binding residues include Asp-236 and His-238. 4-CDP-2-C-methyl-D-erythritol 2-phosphate contacts are provided by residues 236–238 (DVH) and 262–263 (HS). His-270 provides a ligand contact to a divalent metal cation. 4-CDP-2-C-methyl-D-erythritol 2-phosphate-binding positions include 284 to 286 (DIG), 360 to 363 (TTNE), Phe-367, and Arg-370.

In the N-terminal section; belongs to the IspD/TarI cytidylyltransferase family. IspD subfamily. This sequence in the C-terminal section; belongs to the IspF family. A divalent metal cation serves as cofactor.

It carries out the reaction 2-C-methyl-D-erythritol 4-phosphate + CTP + H(+) = 4-CDP-2-C-methyl-D-erythritol + diphosphate. The catalysed reaction is 4-CDP-2-C-methyl-D-erythritol 2-phosphate = 2-C-methyl-D-erythritol 2,4-cyclic diphosphate + CMP. It functions in the pathway isoprenoid biosynthesis; isopentenyl diphosphate biosynthesis via DXP pathway; isopentenyl diphosphate from 1-deoxy-D-xylulose 5-phosphate: step 2/6. The protein operates within isoprenoid biosynthesis; isopentenyl diphosphate biosynthesis via DXP pathway; isopentenyl diphosphate from 1-deoxy-D-xylulose 5-phosphate: step 4/6. Bifunctional enzyme that catalyzes the formation of 4-diphosphocytidyl-2-C-methyl-D-erythritol from CTP and 2-C-methyl-D-erythritol 4-phosphate (MEP) (IspD), and catalyzes the conversion of 4-diphosphocytidyl-2-C-methyl-D-erythritol 2-phosphate (CDP-ME2P) to 2-C-methyl-D-erythritol 2,4-cyclodiphosphate (ME-CPP) with a corresponding release of cytidine 5-monophosphate (CMP) (IspF). This is Bifunctional enzyme IspD/IspF from Brucella suis biovar 1 (strain 1330).